We begin with the raw amino-acid sequence, 910 residues long: Harmonin (910 aa).

An N-terminal domain region spans residues 1–86 (MDRKVAREFR…LTPRRSRKLK (86 aa)). PDZ domains follow at residues 87–171 (EVRL…GLIP) and 211–295 (KVFI…AGRE). The mediates interaction with MYO7B stretch occupies residues 194 to 833 (GVRGGLGSPG…KAWNQGGDWI (640 aa)). Phosphoserine is present on Ser219. 2 coiled-coil regions span residues 299–377 (TDRE…WEED) and 417–482 (TIRK…DLEE). The tract at residues 563–688 (VMPHPPSVNS…PPRGPGVSTI (126 aa)) is disordered. A compositionally biased stretch (pro residues) spans 564–582 (MPHPPSVNSPSKVPAPPVL). Over residues 583 to 596 (PSSGHVSSSSSPWV) the composition is skewed to low complexity. A compositionally biased stretch (pro residues) spans 599–611 (TPPPIPIPPPPSI). The segment covering 650–664 (NTHSGKPSSSPTTER) has biased composition (polar residues). Residues 752-839 (DVRLLRIKKE…GDWIDLVVAV (88 aa)) enclose the PDZ 3 domain. A disordered region spans residues 890-910 (KSRERNQTDPSWRPASSAPSP). Positions 899-910 (PSWRPASSAPSP) are enriched in low complexity.

Part of the IMAC/intermicrovillar adhesion complex/intermicrovillar tip-link complex composed of ANKS4B, MYO7B, USH1C, CDHR2 and CDHR5. Part of a complex composed of USH1C, USH1G and MYO7A. Interacts with F-actin. Interacts with USH2A. Interacts with SLC4A7. Interacts (via PDZ1 domain) with the C-terminus of USHBP1. Interacts (via N-terminus and PDZ 2 domain) with CDH23. Interacts with USH1G. Interacts with MYO7B. Interacts with CDHR2 and CDHR5; may mediate their interaction with MYO7B at the microvilli tip. Interacts (via PDZ 1 domain) with ANKS4B. Interacts (via PDZ 1 domain) with DOCK4. As to expression, detected in stereocilia of cochlear hair cells (at protein level). Isoform 1 is expressed in the eye, cochlea, vestibule, heart, kidney, small intestine and testis; it is barely visible in skeletal muscle, liver, and lung and is absent from the brain. Isoforms 2 and 3 are expressed in the cochlea and vestibule.

It localises to the cytoplasm. The protein localises to the cytosol. It is found in the cytoskeleton. The protein resides in the cell projection. Its subcellular location is the microvillus. Anchoring/scaffolding protein that is a part of the functional network formed by USH1C, USH1G, CDH23 and MYO7A that mediates mechanotransduction in cochlear hair cells. Required for normal development and maintenance of cochlear hair cell bundles. As part of the intermicrovillar adhesion complex/IMAC plays a role in brush border differentiation, controlling microvilli organization and length. Probably plays a central regulatory role in the assembly of the complex, recruiting CDHR2, CDHR5 and MYO7B to the microvilli tips. The protein is Harmonin (Ush1c) of Mus musculus (Mouse).